The chain runs to 85 residues: Large ribosomal subunit protein bL31 (85 aa).

A disordered region spans residues 65–85 (YGMGGAGKAGEDKKAGDKADA). Basic and acidic residues predominate over residues 73–85 (AGEDKKAGDKADA).

The protein belongs to the bacterial ribosomal protein bL31 family. Type A subfamily. As to quaternary structure, part of the 50S ribosomal subunit.

In terms of biological role, binds the 23S rRNA. The protein is Large ribosomal subunit protein bL31 of Synechococcus sp. (strain WH7803).